The following is a 1857-amino-acid chain: MVGPSPAGTVPSHAQSSLPSLPAHLQSDTHLTAHLASRFHVGLPTARLSSQALISLNTYTSSSKGPDGGKEGSAMGEAEDLARRAFTRLGARGENQAIVFLGESGAGKTTLRAHVLSSFLSFSSTPLSSKLSYASFIFDTLTTTKSLTTLTASKAGLFLELQYDGSSSVNPTLIGGKIIDHRLERSRIASVPTGERSFHVLYYLLAGTSAAEKSHLGFDNSIHVSTNAGKLSSASIGHKRWRYLGHPTQLKVGINDAEGFQHFKTALRKLEFPRSEIAEICQILAVILHIGQLDFASGQATLTSAEESGGYSHEGGETVTVVKNKDVLSSVAAFLGLGVDELENSFSYRTKTIHRERVTVMLDPKGARQNADELARTIYSLLVAYILENVNQRICAAEDSVANTVSIVDFPGFSQACSTGSTLDQLLSNAATESLYNFCLQSFFDRKADMLEREEVVVPATSYFDNTDAVRGLLKHGNGLLSILDDQTRRGRTEAQFAESLKKRFENKNPAIVVGSSGSTHGTGYVSQQARSAFTVKHFAGEVDYSISGLLEENGEVISGDLMNLMKSTRSDFVRELFGQEALQTVTHPKEKTAIMQAQVSSKPLRMPSMARRKASPASRLTFDAPTAEEPEDNESYGGSTAKSSGRRKSAMSMTGMQGAAGQFLSSLEIVNKCLSSPSLNPYFIFCLKPNDRRIANQFDSKCVRAQVQTFGIAEISQRLRNADFSVFLPFEEFLGLAEVGNVVVGSDKEKSEVVLDEKRWPGNEARVGSTGVFLSERCWADLAKVGERVVPVYHADGSDEGGDGLLHPRTAGYGDSKVRLLNPADQSLGNFIYGDESKQGYFGSRDIDGRSDTGGSGLNSGDMFHNLETREQMLEKGNEKKMEEVDEVPVSGSRKRWMAIVWLLTFYIPDFAIRLFGRMKRKDVRTAWREKFAINLIIWFSCAVAIFFIVAFPGLVCPTQHVYSAAELESHNGKNGHDSYIAIRGVVFDLDKFMPRHYPDIVPQSSLKKYAGMDATGLFPVQVSALCQGKDGSIDPTVLLDYTPTNISGSATTISTGDLNAKYHDFRYYTNDSRPDWFAEQMKELRATYLKGYIGYTPQYISTLAKKSQNIGSIDGKVYDLTTYISGGRRVAAPTGKEVPANVDREFMDPLVVSLFQDLPGQDLSKHWEQLQIDAGMRDRMQMCLDNLFFVGKVDTRNSAQCQFARYFILAISILICAVVIFKFAAALQFGKKNVPENLDKFIICQVPAYTEDEESLRRAMDSMARMQYDDKRKLLVVICDGMIIGQGNDRPTPRIVLDILGVPESVDPEPLSFESLGEGMKQHNMGKIYSGLYEVQGHIVPFLVVVKVGKPSEVSRPGNRGKRDSQMVLMRFLNRVHYNLPMSPMELEMYHQIRNIIGVNPTFYEFILQVDADTVVAPDSGTRFVASCLADTRIIGICGETGLTNAKHSAVTMIQVYEYFISHNLIKAFESLFGSVTCLPGCFTMYRIRSAETAKPLFVSKEVVEAYSEIRVDTLHMKNLLHLGEDRYLTTLLLKHHPSFKTKFLFAAKAWTIAPESFSVFLSQRRRWINSTVHNLIELIPLQQLCGFCCFSMRFIVFVDLLSTCIQPVSLAYIIYLIVWLARDSSTIPWTSFVLIAAIYGLQALIFIFRRKWEMIGWMIVYLLAMPIFSVALPFYSFWHMDDFSWGNTRVITGEKGRKVVISDEGKFDPASIPKKRWEEYQAELWEAQTSRDDRSEVSGFSYGTKSYHPAQSEYGFPGARPMSQFDLPRYGSRMSLAPSEMMSRHMDMEMEDLSHLPSDDAILAEIREILRTADLMTVTKKSIKQELERRFGVNLDAKRPYINSATEAVLSGAL.

Residues 1–22 (MVGPSPAGTVPSHAQSSLPSLP) form a disordered region. The 788-residue stretch at 1 to 788 (MVGPSPAGTV…CWADLAKVGE (788 aa)) folds into the Myosin motor domain. 102–109 (GESGAGKT) is a binding site for ATP. Residues 601–653 (SSKPLRMPSMARRKASPASRLTFDAPTAEEPEDNESYGGSTAKSSGRRKSAMS) form a disordered region. An N-linked (GlcNAc...) asparagine glycan is attached at Asn-634. The interval 668-692 (LEIVNKCLSSPSLNPYFIFCLKPND) is actin-binding. 2 helical membrane passes run 898–918 (WMAI…RLFG) and 937–957 (LIIW…PGLV). The 60-residue stretch at 961–1020 (QHVYSAAELESHNGKNGHDSYIAIRGVVFDLDKFMPRHYPDIVPQSSLKKYAGMDATGLF) folds into the Cytochrome b5 heme-binding domain. 2 N-linked (GlcNAc...) asparagine glycosylation sites follow: Asn-1047 and Asn-1072. The chain crosses the membrane as a helical span at residues 1209–1229 (FILAISILICAVVIFKFAAAL). Asn-1572 is a glycosylation site (N-linked (GlcNAc...) asparagine). The next 3 membrane-spanning stretches (helical) occupy residues 1603 to 1623 (LLST…IVWL), 1630 to 1650 (IPWT…LIFI), and 1657 to 1677 (MIGW…ALPF). The 56-residue stretch at 1799-1854 (LPSDDAILAEIREILRTADLMTVTKKSIKQELERRFGVNLDAKRPYINSATEAVLS) folds into the DEK-C domain.

In the N-terminal section; belongs to the TRAFAC class myosin-kinesin ATPase superfamily. Myosin family. This sequence in the C-terminal section; belongs to the chitin synthase family. Class V subfamily.

The protein resides in the cell membrane. It localises to the cell septum. Its subcellular location is the cell tip. It carries out the reaction [(1-&gt;4)-N-acetyl-beta-D-glucosaminyl](n) + UDP-N-acetyl-alpha-D-glucosamine = [(1-&gt;4)-N-acetyl-beta-D-glucosaminyl](n+1) + UDP + H(+). Polymerizes chitin, a structural polymer of the cell wall and septum, by transferring the sugar moiety of UDP-GlcNAc to the non-reducing end of the growing chitin polymer. Specifically involved in hyphal elongation and new cell wall formation. This is Chitin synthase Y from Aspergillus oryzae (strain ATCC 42149 / RIB 40) (Yellow koji mold).